The following is a 400-amino-acid chain: 1-deoxy-D-xylulose 5-phosphate reductoisomerase (400 aa).

NADPH-binding residues include Thr10, Gly11, Ser12, Ile13, Gly36, Asn38, and Asn124. Residue Lys125 coordinates 1-deoxy-D-xylulose 5-phosphate. Glu126 provides a ligand contact to NADPH. Asp150 contacts Mn(2+). Residues Ser151, Glu152, Ser186, and His209 each coordinate 1-deoxy-D-xylulose 5-phosphate. A Mn(2+)-binding site is contributed by Glu152. Gly215 lines the NADPH pocket. Residues Ser222, Asn227, Lys228, and Glu231 each coordinate 1-deoxy-D-xylulose 5-phosphate. A Mn(2+)-binding site is contributed by Glu231.

Belongs to the DXR family. The cofactor is Mg(2+). Mn(2+) is required as a cofactor.

The enzyme catalyses 2-C-methyl-D-erythritol 4-phosphate + NADP(+) = 1-deoxy-D-xylulose 5-phosphate + NADPH + H(+). The protein operates within isoprenoid biosynthesis; isopentenyl diphosphate biosynthesis via DXP pathway; isopentenyl diphosphate from 1-deoxy-D-xylulose 5-phosphate: step 1/6. Its function is as follows. Catalyzes the NADPH-dependent rearrangement and reduction of 1-deoxy-D-xylulose-5-phosphate (DXP) to 2-C-methyl-D-erythritol 4-phosphate (MEP). This is 1-deoxy-D-xylulose 5-phosphate reductoisomerase from Aliivibrio fischeri (strain ATCC 700601 / ES114) (Vibrio fischeri).